Here is a 416-residue protein sequence, read N- to C-terminus: Gamma-glutamyl phosphate reductase (416 aa).

The protein belongs to the gamma-glutamyl phosphate reductase family.

Its subcellular location is the cytoplasm. The enzyme catalyses L-glutamate 5-semialdehyde + phosphate + NADP(+) = L-glutamyl 5-phosphate + NADPH + H(+). The protein operates within amino-acid biosynthesis; L-proline biosynthesis; L-glutamate 5-semialdehyde from L-glutamate: step 2/2. Its function is as follows. Catalyzes the NADPH-dependent reduction of L-glutamate 5-phosphate into L-glutamate 5-semialdehyde and phosphate. The product spontaneously undergoes cyclization to form 1-pyrroline-5-carboxylate. In Streptococcus thermophilus (strain ATCC BAA-491 / LMD-9), this protein is Gamma-glutamyl phosphate reductase.